The following is a 193-amino-acid chain: Peptide deformylase (193 aa).

Cys111 and His155 together coordinate Fe cation. The active site involves Glu156. His159 contacts Fe cation.

This sequence belongs to the polypeptide deformylase family. The cofactor is Fe(2+).

It catalyses the reaction N-terminal N-formyl-L-methionyl-[peptide] + H2O = N-terminal L-methionyl-[peptide] + formate. Removes the formyl group from the N-terminal Met of newly synthesized proteins. Requires at least a dipeptide for an efficient rate of reaction. N-terminal L-methionine is a prerequisite for activity but the enzyme has broad specificity at other positions. The chain is Peptide deformylase from Mycoplasma genitalium (strain ATCC 33530 / DSM 19775 / NCTC 10195 / G37) (Mycoplasmoides genitalium).